The sequence spans 221 residues: Large ribosomal subunit protein uL3 (221 aa).

Positions 140-160 (GGPKTHGSGFHRHAGSIGMRS) are disordered.

This sequence belongs to the universal ribosomal protein uL3 family. As to quaternary structure, part of the 50S ribosomal subunit. Forms a cluster with proteins L14 and L19.

Functionally, one of the primary rRNA binding proteins, it binds directly near the 3'-end of the 23S rRNA, where it nucleates assembly of the 50S subunit. The sequence is that of Large ribosomal subunit protein uL3 from Chlamydia caviae (strain ATCC VR-813 / DSM 19441 / 03DC25 / GPIC) (Chlamydophila caviae).